The following is a 225-amino-acid chain: Urease accessory protein UreF (225 aa).

This sequence belongs to the UreF family. In terms of assembly, ureD, UreF and UreG form a complex that acts as a GTP-hydrolysis-dependent molecular chaperone, activating the urease apoprotein by helping to assemble the nickel containing metallocenter of UreC. The UreE protein probably delivers the nickel.

The protein resides in the cytoplasm. Required for maturation of urease via the functional incorporation of the urease nickel metallocenter. In Picosynechococcus sp. (strain ATCC 27264 / PCC 7002 / PR-6) (Agmenellum quadruplicatum), this protein is Urease accessory protein UreF.